A 535-amino-acid chain; its full sequence is Probable histone-arginine methyltransferase 1.3 (535 aa).

At Met1 the chain carries N-acetylmethionine. The region spanning 141-456 (EASSAKMYFH…QSYTIDLTLS (316 aa)) is the SAM-dependent MTase PRMT-type domain. The S-adenosyl-L-methionine site is built by Gln158, Arg167, Gly191, Glu213, and Glu243. Catalysis depends on residues Glu257 and Glu266. Residue Ser271 participates in S-adenosyl-L-methionine binding. Residues 494–517 (VAQEPPLQPQPELSTQQDIQTPND) form a disordered region. Residues 507–516 (STQQDIQTPN) show a composition bias toward polar residues.

It belongs to the class I-like SAM-binding methyltransferase superfamily. Protein arginine N-methyltransferase family. As to quaternary structure, interacts with PQT3 in the nucleus. Post-translationally, ubiquitinated by PQT3.

It localises to the nucleus. Its subcellular location is the cytoplasm. It catalyses the reaction L-arginyl-[protein] + 2 S-adenosyl-L-methionine = N(omega),N(omega)-dimethyl-L-arginyl-[protein] + 2 S-adenosyl-L-homocysteine + 2 H(+). Functionally, methylates (mono- and asymmetric dimethylation) the guanidino nitrogens of arginyl residues in several proteins involved in DNA packaging, transcription regulation, and mRNA stability. Recruited to promoters upon gene activation, methylates histone H3 and activates transcription via chromatin remodeling. Positive regulator in the oxidative stress tolerance that promotes the expression of enzymes preventing oxidative stress such as APX1 and GPX1 by histone methylation (H3R17me2a). Confers tolerance to cadmium CdCl(2) and salt NaCl stresses. The polypeptide is Probable histone-arginine methyltransferase 1.3 (PRMT13) (Arabidopsis thaliana (Mouse-ear cress)).